The primary structure comprises 250 residues: NADH-quinone oxidoreductase subunit C (250 aa).

Disordered stretches follow at residues 1-33 and 228-250; these read MSDD…PTGE and LGGV…RSYN.

Belongs to the complex I 30 kDa subunit family. NDH-1 is composed of 14 different subunits. Subunits NuoB, C, D, E, F, and G constitute the peripheral sector of the complex.

Its subcellular location is the cell membrane. It catalyses the reaction a quinone + NADH + 5 H(+)(in) = a quinol + NAD(+) + 4 H(+)(out). Its function is as follows. NDH-1 shuttles electrons from NADH, via FMN and iron-sulfur (Fe-S) centers, to quinones in the respiratory chain. The immediate electron acceptor for the enzyme in this species is believed to be a menaquinone. Couples the redox reaction to proton translocation (for every two electrons transferred, four hydrogen ions are translocated across the cytoplasmic membrane), and thus conserves the redox energy in a proton gradient. The protein is NADH-quinone oxidoreductase subunit C of Nocardioides sp. (strain ATCC BAA-499 / JS614).